Consider the following 483-residue polypeptide: NADH-quinone oxidoreductase subunit N (483 aa).

The next 13 membrane-spanning stretches (helical) occupy residues 9–29 (LVLPEVILGVSALVLLVWGAF), 35–55 (PLFTGAAVLALLGAAVAAVVG), 69–89 (AAATYAKVAIYLSSAVAIVLG), 104–124 (AVLVILAAVGMGVTASAGDLI), 158–178 (FVLGALSSGLLLYGASLIYGF), 201–221 (VGLLFGLVFLICGLAFKVSAA), 234–254 (APTSVVGFFAAAPKLAAMMMF), 272–292 (VLIIASLASVFVGAFAGLAQT), 297–317 (LWAYSSIANVGYALLGVATGG), 325–345 (LLFMTLYMVDVTGFFACLQAL), 368–388 (IAVAMTAFSLSALGMPPFSGF), 404–424 (VLLQWAAVLGLVGSVVAAFYY), and 449–469 (AVGFAAALFSFPVVMVALIWL).

The protein belongs to the complex I subunit 2 family. As to quaternary structure, NDH-1 is composed of 14 different subunits. Subunits NuoA, H, J, K, L, M, N constitute the membrane sector of the complex.

It localises to the cell inner membrane. The enzyme catalyses a quinone + NADH + 5 H(+)(in) = a quinol + NAD(+) + 4 H(+)(out). In terms of biological role, NDH-1 shuttles electrons from NADH, via FMN and iron-sulfur (Fe-S) centers, to quinones in the respiratory chain. The immediate electron acceptor for the enzyme in this species is believed to be ubiquinone. Couples the redox reaction to proton translocation (for every two electrons transferred, four hydrogen ions are translocated across the cytoplasmic membrane), and thus conserves the redox energy in a proton gradient. The chain is NADH-quinone oxidoreductase subunit N from Caulobacter sp. (strain K31).